Here is a 398-residue protein sequence, read N- to C-terminus: Calcium-binding and coiled-coil domain-containing protein 2 (398 aa).

The CLIR motif lies at 133–136; it reads ILVV. Positions 137 to 301 form a coiled coil; the sequence is TTQGEVEEIE…RENSRLLSYM (165 aa). Positions 203 to 206 match the LIR-like motif; it reads DYWE. The disordered stretch occupies residues 314 to 341; it reads TSDEGGAGQNPGLVYGNPYSGIQESSSP. Residues 323 to 333 are interaction with LGALS8; it reads NPGLVYGNPYS. The interaction with MYO6 stretch occupies residues 347–398; that stretch reads KKCPICKADDICDHTLEQQQMQALCLNCPICDKIFPATEKQIFEDHVFCHSL. A UBZ1-type zinc finger spans residues 371–396; the sequence is CLNCPICDKIFPATEKQIFEDHVFCH. C374, C377, H392, and H396 together coordinate Zn(2+). At S397 the chain carries Phosphoserine.

This sequence belongs to the CALCOCO family. As to quaternary structure, dimer. Part of a complex consisting of CALCOCO2, TAX1BP1 and MYO6. Interacts with MYO6. Interacts with GEMIN4. Interacts with ATG8 family members MAP1LC3A, MAP1LC3B, GABARAP, GABARAPL1 and GABARAPL2. Interacts with ATG8 family member MAP1LC3C. Interacts with LGALS8. Interacts with TOM1; the interaction is indirect and is mediated by MYO6, which acts as a bridge between TOM1 and CALCOCO2. Interacts with AZI2.

The protein localises to the cytoplasm. It is found in the perinuclear region. It localises to the cytoskeleton. Its subcellular location is the cytoplasmic vesicle. The protein resides in the autophagosome membrane. In terms of biological role, xenophagy-specific receptor required for autophagy-mediated intracellular bacteria degradation. Acts as an effector protein of galectin-sensed membrane damage that restricts the proliferation of infecting pathogens upon entry into the cytosol by targeting LGALS8-associated bacteria for autophagy. Initially orchestrates bacteria targeting to autophagosomes and subsequently ensures pathogen degradation by regulating pathogen-containing autophagosome maturation. Bacteria targeting to autophagosomes relies on its interaction with MAP1LC3A, MAP1LC3B and/or GABARAPL2, whereas regulation of pathogen-containing autophagosome maturation requires the interaction with MAP3LC3C. May play a role in ruffle formation and actin cytoskeleton organization and seems to negatively regulate constitutive secretion. In Macaca fascicularis (Crab-eating macaque), this protein is Calcium-binding and coiled-coil domain-containing protein 2.